The sequence spans 177 residues: Alkyl hydroperoxide reductase AhpD (177 aa).

C130 serves as the catalytic Proton donor. C130 and C133 are oxidised to a cystine. The active-site Cysteine sulfenic acid (-SOH) intermediate is the C133.

This sequence belongs to the AhpD family. Homotrimer.

It catalyses the reaction N(6)-[(R)-dihydrolipoyl]-L-lysyl-[lipoyl-carrier protein] + a hydroperoxide = N(6)-[(R)-lipoyl]-L-lysyl-[lipoyl-carrier protein] + an alcohol + H2O. Functionally, antioxidant protein with alkyl hydroperoxidase activity. Required for the reduction of the AhpC active site cysteine residues and for the regeneration of the AhpC enzyme activity. The chain is Alkyl hydroperoxide reductase AhpD from Corynebacterium aurimucosum (strain ATCC 700975 / DSM 44827 / CIP 107346 / CN-1) (Corynebacterium nigricans).